Reading from the N-terminus, the 232-residue chain is MTQHMIEIKSPYFLREESLASPADFAAVFGNRNPLVLEIGCGIGDFVTQLASSAPERNYLAIDIYNKGCNKTCNRLEQARLTNVRVMRIEARYLLEQFLATESLAAVYINCPDPWPKKRHLKRRLVNERFLQTLLHYLQPGGELFFSSDVADYAHAVTAHLNQIKGYENRLPVPVALDMAGYPLSKYMRRFLAQGQSIHFIHHRRNPQHTCETAAPQPVHRGFRTAWSANNG.

Residues Glu-38, Asp-63, Glu-90, and Asp-113 each contribute to the S-adenosyl-L-methionine site. Asp-113 is an active-site residue. Positions 117 and 149 each coordinate substrate.

Belongs to the class I-like SAM-binding methyltransferase superfamily. TrmB family.

It carries out the reaction guanosine(46) in tRNA + S-adenosyl-L-methionine = N(7)-methylguanosine(46) in tRNA + S-adenosyl-L-homocysteine. The protein operates within tRNA modification; N(7)-methylguanine-tRNA biosynthesis. Its function is as follows. Catalyzes the formation of N(7)-methylguanine at position 46 (m7G46) in tRNA. The polypeptide is tRNA (guanine-N(7)-)-methyltransferase (Syntrophotalea carbinolica (strain DSM 2380 / NBRC 103641 / GraBd1) (Pelobacter carbinolicus)).